We begin with the raw amino-acid sequence, 374 residues long: DNA replication and repair protein RecF (374 aa).

Residue 30 to 37 (GENAQGKT) participates in ATP binding.

It belongs to the RecF family.

The protein resides in the cytoplasm. Functionally, the RecF protein is involved in DNA metabolism; it is required for DNA replication and normal SOS inducibility. RecF binds preferentially to single-stranded, linear DNA. It also seems to bind ATP. This is DNA replication and repair protein RecF from Lactiplantibacillus plantarum (strain ATCC BAA-793 / NCIMB 8826 / WCFS1) (Lactobacillus plantarum).